A 485-amino-acid chain; its full sequence is Betaine aldehyde dehydrogenase (485 aa).

Residues threonine 23, isoleucine 24, and aspartate 90 each coordinate K(+). Residue 147 to 149 (GAW) coordinates NAD(+). Lysine 159 serves as the catalytic Charge relay system. NAD(+) is bound by residues 173 to 176 (KPSE) and 226 to 229 (EVGT). Residue leucine 241 participates in K(+) binding. The active-site Proton acceptor is the glutamate 247. NAD(+)-binding residues include glycine 249, cysteine 281, and glutamate 382. The Nucleophile role is filled by cysteine 281. At cysteine 281 the chain carries Cysteine sulfenic acid (-SOH). K(+)-binding residues include lysine 452 and glycine 455. Glutamate 459 functions as the Charge relay system in the catalytic mechanism.

Belongs to the aldehyde dehydrogenase family. Dimer of dimers. It depends on K(+) as a cofactor.

It catalyses the reaction betaine aldehyde + NAD(+) + H2O = glycine betaine + NADH + 2 H(+). Its pathway is amine and polyamine biosynthesis; betaine biosynthesis via choline pathway; betaine from betaine aldehyde: step 1/1. In terms of biological role, involved in the biosynthesis of the osmoprotectant glycine betaine. Catalyzes the irreversible oxidation of betaine aldehyde to the corresponding acid. The protein is Betaine aldehyde dehydrogenase of Marinomonas sp. (strain MWYL1).